The sequence spans 258 residues: UPF0246 protein ABO_1338 (258 aa).

It belongs to the UPF0246 family.

This is UPF0246 protein ABO_1338 from Alcanivorax borkumensis (strain ATCC 700651 / DSM 11573 / NCIMB 13689 / SK2).